Here is a 2293-residue protein sequence, read N- to C-terminus: Protein Ycf2 B (2293 aa).

1647–1654 (GSIGTGRS) provides a ligand contact to ATP.

The protein belongs to the Ycf2 family.

It localises to the plastid. Its subcellular location is the chloroplast stroma. Its function is as follows. Probable ATPase of unknown function. Its presence in a non-photosynthetic plant (Epifagus virginiana) and experiments in tobacco indicate that it has an essential function which is probably not related to photosynthesis. The polypeptide is Protein Ycf2 B (Crucihimalaya wallichii (Rock-cress)).